A 381-amino-acid chain; its full sequence is Creatine kinase M-type (381 aa).

The region spanning 11–98 is the Phosphagen kinase N-terminal domain; that stretch reads KLNFKAEEEY…FDPIIQDRHG (88 aa). The Phosphagen kinase C-terminal domain occupies 125–367; it reads YVLSSRVRTG…KLMVEMEKKL (243 aa). Residue 128–132 participates in ATP binding; it reads SSRVR. Position 164 is a phosphoserine (serine 164). Threonine 166 is subject to Phosphothreonine. The residue at position 178 (serine 178) is a Phosphoserine. Threonine 180 bears the Phosphothreonine mark. Histidine 191 is a binding site for ATP. The residue at position 199 (serine 199) is a Phosphoserine. ATP contacts are provided by arginine 236 and arginine 292. Threonine 313 and threonine 322 each carry phosphothreonine. ATP is bound by residues 320–325 and aspartate 335; that span reads RGTGGV. Serine 372 is subject to Phosphoserine.

The protein belongs to the ATP:guanido phosphotransferase family. As to quaternary structure, dimer of identical or non-identical chains, which can be either B (brain type) or M (muscle type). With MM being the major form in skeletal muscle and myocardium, MB existing in myocardium, and BB existing in many tissues, especially brain.

The protein resides in the cytoplasm. The catalysed reaction is creatine + ATP = N-phosphocreatine + ADP + H(+). Functionally, reversibly catalyzes the transfer of phosphate between ATP and various phosphogens (e.g. creatine phosphate). Creatine kinase isoenzymes play a central role in energy transduction in tissues with large, fluctuating energy demands, such as skeletal muscle, heart, brain and spermatozoa. The protein is Creatine kinase M-type (CKM) of Bos taurus (Bovine).